The chain runs to 171 residues: Co-chaperone protein HscB homolog (171 aa).

The J domain occupies 2 to 74 (NHFELFGLPS…ISRAEYILAE (73 aa)).

Belongs to the HscB family. Interacts with HscA and stimulates its ATPase activity.

Functionally, co-chaperone involved in the maturation of iron-sulfur cluster-containing proteins. Seems to help targeting proteins to be folded toward HscA. The polypeptide is Co-chaperone protein HscB homolog (Vibrio parahaemolyticus serotype O3:K6 (strain RIMD 2210633)).